The chain runs to 417 residues: UDP-N-acetylglucosamine 1-carboxyvinyltransferase 2 (417 aa).

Phosphoenolpyruvate is bound at residue 22–23; it reads KN. Arg92 lines the UDP-N-acetyl-alpha-D-glucosamine pocket. Residue Cys116 is the Proton donor of the active site. Cys116 carries the 2-(S-cysteinyl)pyruvic acid O-phosphothioketal modification. Residues 121–125, Asp305, and Ile327 contribute to the UDP-N-acetyl-alpha-D-glucosamine site; that span reads RPIDL.

This sequence belongs to the EPSP synthase family. MurA subfamily.

Its subcellular location is the cytoplasm. The catalysed reaction is phosphoenolpyruvate + UDP-N-acetyl-alpha-D-glucosamine = UDP-N-acetyl-3-O-(1-carboxyvinyl)-alpha-D-glucosamine + phosphate. The protein operates within cell wall biogenesis; peptidoglycan biosynthesis. Functionally, cell wall formation. Adds enolpyruvyl to UDP-N-acetylglucosamine. The polypeptide is UDP-N-acetylglucosamine 1-carboxyvinyltransferase 2 (Caldanaerobacter subterraneus subsp. tengcongensis (strain DSM 15242 / JCM 11007 / NBRC 100824 / MB4) (Thermoanaerobacter tengcongensis)).